A 124-amino-acid chain; its full sequence is Competence protein ComGG (124 aa).

An N-terminal signal peptide occupies residues 1–28; that stretch reads MYRTRGFIYPAVLFVSALVLLIVNFVAA.

The transformation pili are flexible filaments, consisting mainly of the major pilin ComGC and smaller amounts of the minor pilins, including at least ComGD, ComGF and ComGG. Interacts with ComGC; the interaction is probably direct. Interacts with ComGD. Interacts with ComGF. May act as a link between ComGC, ComGD and ComGF. Homodimer; disulfide-linked. A minor fraction of ComGG is found as a disulfide-bonded homodimer. Partial processing of ComGG in competent cells requires ComC.

It is found in the cell membrane. The protein resides in the secreted. Required for formation of the type IV-like pilus (T4P) that plays a role in transformation. Transformation pili are dynamically extended and retracted, perhaps thereby promoting DNA uptake and transformation. Required for transformation and DNA binding. This is Competence protein ComGG (comGG) from Bacillus subtilis (strain 168).